The chain runs to 259 residues: MGKWTIKEASELLQEIGTEEDERFQILLKDERKGIQNLISKWRKQKKKMQEEKEQFLEMSKYENALRKQGISYIAGIDEVGRGPLAGPVVTAAVILPEEFYIPGLNDSKKLSEAKRELFYDEIREKAIAIGVGIVSPQVIDEMNIYQATKRAMLDAVANLSYAPEHLLIDAMKLPTSIPQTSIVKGDAKSISISAASIIAKVTRDRMMKELGKTYPEYGFEKHMGYGTKQHLEAIETYGVLEEHRKTFAPIKDMIKNKL.

Residues 72 to 259 (SYIAGIDEVG…PIKDMIKNKL (188 aa)) enclose the RNase H type-2 domain. The a divalent metal cation site is built by aspartate 78, glutamate 79, and aspartate 170.

Belongs to the RNase HII family. It depends on Mn(2+) as a cofactor. Requires Mg(2+) as cofactor.

The protein resides in the cytoplasm. It catalyses the reaction Endonucleolytic cleavage to 5'-phosphomonoester.. Its function is as follows. Endonuclease that specifically degrades the RNA of RNA-DNA hybrids. The chain is Ribonuclease HII from Bacillus cytotoxicus (strain DSM 22905 / CIP 110041 / 391-98 / NVH 391-98).